The primary structure comprises 487 residues: Transmembrane protein 161B (487 aa).

Asn-34 carries an N-linked (GlcNAc...) asparagine glycan. Residues 107–127 traverse the membrane as a helical segment; the sequence is LVDFTVAATIVYLVTEVYYSF. Asn-135 carries N-linked (GlcNAc...) asparagine glycosylation. The next 2 membrane-spanning stretches (helical) occupy residues 136–156 and 169–189; these read ISLVWCLLVLSFAIKVLFSLT and SVCVTFGFFFFVKAMAVLIVT. An N-linked (GlcNAc...) asparagine glycan is attached at Asn-203. A run of 5 helical transmembrane segments spans residues 228-248, 265-285, 305-325, 367-387, and 459-479; these read FKFFLAVFCSLIGAFLTFPGL, ITQTLLHINFLAPLFMVLLWV, LMTEATFDTLRLWLIILLCVL, VFYYLCVIALQYVAPLVMLLH, and LSFLTWWIAACLFSTSLFGLF.

Belongs to the TMEM161 family.

The protein localises to the cell membrane. In terms of biological role, essential for maintaining normal cardiac rhythm in the developing heart and for neonatal survival. Inhibits potassium and calcium currents in the cardiomyocytes, this assists in timely action potential repolarization and thereby maintains normal cardiac rhythm. The protein is Transmembrane protein 161B (Tmem161b) of Mus musculus (Mouse).